Consider the following 226-residue polypeptide: Urease accessory protein UreF (226 aa).

The protein belongs to the UreF family. As to quaternary structure, ureD, UreF and UreG form a complex that acts as a GTP-hydrolysis-dependent molecular chaperone, activating the urease apoprotein by helping to assemble the nickel containing metallocenter of UreC. The UreE protein probably delivers the nickel.

The protein localises to the cytoplasm. In terms of biological role, required for maturation of urease via the functional incorporation of the urease nickel metallocenter. The polypeptide is Urease accessory protein UreF (Burkholderia vietnamiensis (strain G4 / LMG 22486) (Burkholderia cepacia (strain R1808))).